Consider the following 187-residue polypeptide: Large ribosomal subunit protein uL5 (187 aa).

This sequence belongs to the universal ribosomal protein uL5 family. As to quaternary structure, part of the 50S ribosomal subunit; part of the 5S rRNA/L5/L18/L25 subcomplex. Contacts the 5S rRNA and the P site tRNA. Forms a bridge to the 30S subunit in the 70S ribosome.

In terms of biological role, this is one of the proteins that bind and probably mediate the attachment of the 5S RNA into the large ribosomal subunit, where it forms part of the central protuberance. In the 70S ribosome it contacts protein S13 of the 30S subunit (bridge B1b), connecting the 2 subunits; this bridge is implicated in subunit movement. Contacts the P site tRNA; the 5S rRNA and some of its associated proteins might help stabilize positioning of ribosome-bound tRNAs. This is Large ribosomal subunit protein uL5 from Ruegeria sp. (strain TM1040) (Silicibacter sp.).